A 390-amino-acid chain; its full sequence is Prostaglandin E2 receptor EP3 subtype (390 aa).

The Extracellular segment spans residues 1-53; sequence MKETRGYGGDAPFCTRLNHSYTGMWAPERSAEARGNLTRPPGSGEDCGSVSVA. Residues N18 and N36 are each glycosylated (N-linked (GlcNAc...) asparagine). A helical transmembrane segment spans residues 54 to 78; the sequence is FPITMLLTGFVGNALAMLLVSRSYR. The Cytoplasmic segment spans residues 79–91; it reads RRESKRKKSFLLC. The chain crosses the membrane as a helical span at residues 92–112; it reads IGWLALTDLVGQLLTTPVVIV. Over 113-131 the chain is Extracellular; sequence VYLSKQRWEHIDPSGRLCT. The chain crosses the membrane as a helical span at residues 132-153; sequence FFGLTMTVFGLSSLFIASAMAV. Residues 154-175 lie on the Cytoplasmic side of the membrane; that stretch reads ERALAIRAPHWYASHMKTRATR. The chain crosses the membrane as a helical span at residues 176 to 197; it reads AVLLGVWLAVLAFALLPVLGVG. Topologically, residues 198-227 are extracellular; that stretch reads QYTVQWPGTWCFISTGRGGNGTSSSHNWGN. The helical transmembrane segment at 228 to 253 threads the bilayer; that stretch reads LFFASAFAFLGLLALTVTFSCNLATI. The Cytoplasmic portion of the chain corresponds to 254 to 283; the sequence is KALVSRCRAKATASQSSAQWGRITTETAIQ. Residues 284–307 form a helical membrane-spanning segment; the sequence is LMGIMCVLSVCWSPLLIMMLKMIF. The Extracellular segment spans residues 308–327; sequence NQTSVEHCKTHTEKQKECNF. Residues 328 to 349 traverse the membrane as a helical segment; it reads FLIAVRLASLNQILDPWVYLLL. Over 350 to 390 the chain is Cytoplasmic; it reads RKILLRKFCQIRYHTNNYASSSTSLPCQCSSTLMWSDHLER.

Belongs to the G-protein coupled receptor 1 family. Interacts (via C-terminus) with MKLN1. As to expression, detected in kidney. Expressed in small intestine, heart, pancreas, gastric fundic mucosa, mammary artery and pulmonary vessels.

The protein resides in the cell membrane. Functionally, receptor for prostaglandin E2 (PGE2). The activity of this receptor can couple to both the inhibition of adenylate cyclase mediated by G(i) proteins, and to an elevation of intracellular calcium. Required for normal development of fever in response to pyrinogens, including IL1B, prostaglandin E2 and bacterial lipopolysaccharide (LPS). Required for normal potentiation of platelet aggregation by prostaglandin E2, and thus plays a role in the regulation of blood coagulation. Required for increased HCO3(-) secretion in the duodenum in response to mucosal acidification, and thereby contributes to the protection of the mucosa against acid-induced ulceration. Not required for normal kidney function, normal urine volume and osmolality. This Homo sapiens (Human) protein is Prostaglandin E2 receptor EP3 subtype (PTGER3).